Consider the following 124-residue polypeptide: Small ribosomal subunit protein uS12 (124 aa).

Aspartate 89 is modified (3-methylthioaspartic acid).

It belongs to the universal ribosomal protein uS12 family. As to quaternary structure, part of the 30S ribosomal subunit. Contacts proteins S8 and S17. May interact with IF1 in the 30S initiation complex.

In terms of biological role, with S4 and S5 plays an important role in translational accuracy. Its function is as follows. Interacts with and stabilizes bases of the 16S rRNA that are involved in tRNA selection in the A site and with the mRNA backbone. Located at the interface of the 30S and 50S subunits, it traverses the body of the 30S subunit contacting proteins on the other side and probably holding the rRNA structure together. The combined cluster of proteins S8, S12 and S17 appears to hold together the shoulder and platform of the 30S subunit. The protein is Small ribosomal subunit protein uS12 of Shewanella sediminis (strain HAW-EB3).